A 617-amino-acid chain; its full sequence is ATP-dependent RNA helicase DBP1 (617 aa).

Positions 1–90 are disordered; that stretch reads MADLPQKVSN…TSANYNRGGS (90 aa). Polar residues predominate over residues 7–17; the sequence is KVSNLSINNKE. The span at 38–58 shows a compositional bias: basic and acidic residues; the sequence is PSFERSTPKQEDKVTGGDFFR. The span at 79–90 shows a compositional bias: polar residues; the sequence is GGTSANYNRGGS. The Q motif signature appears at 154 to 182; sequence LDFSSPPLDELLMENIKLASFTKPTPVQK. In terms of domain architecture, Helicase ATP-binding spans 185 to 374; the sequence is IPIVTKGRDL…RDFLDNYIFL (190 aa). An ATP-binding site is contributed by 198 to 205; that stretch reads AQTGSGKT. The DEAD box motif lies at 318–321; that stretch reads DEAD. The region spanning 385–545 is the Helicase C-terminal domain; the sequence is NITQRILYVD…EVPTFLSDLS (161 aa). A disordered region spans residues 542–617; the sequence is SDLSRQNSRG…GYGNSNASWW (76 aa). Residues 580 to 594 show a composition bias toward polar residues; that stretch reads FGSTRPRNTGTSNWG.

The protein belongs to the DEAD box helicase family. DDX3/DED1 subfamily.

The protein localises to the cytoplasm. The catalysed reaction is ATP + H2O = ADP + phosphate + H(+). Functionally, ATP-binding RNA helicase involved in translation initiation. Remodels RNA in response to ADP and ATP concentrations by facilitating disruption, but also formation of RNA duplexes. Redundant to DED1, may be required in conditions in which DED1 expression is decreased. The sequence is that of ATP-dependent RNA helicase DBP1 (DBP1) from Saccharomyces cerevisiae (strain ATCC 204508 / S288c) (Baker's yeast).